We begin with the raw amino-acid sequence, 200 residues long: Holliday junction branch migration complex subunit RuvA (200 aa).

Residues 1 to 63 (MYAYVKGKLT…EDAQLLYGFS (63 aa)) form a domain I region. The tract at residues 64 to 142 (SEEEKDMFLS…ITEEDSDSLL (79 aa)) is domain II. The flexible linker stretch occupies residues 143–149 (QVDATST). Positions 150 to 200 (VQDQFVQEAMLALEALGYSKRELAKVEKTLNKNKYDSVDEAVKAGLQLVVS) are domain III.

It belongs to the RuvA family. As to quaternary structure, homotetramer. Forms an RuvA(8)-RuvB(12)-Holliday junction (HJ) complex. HJ DNA is sandwiched between 2 RuvA tetramers; dsDNA enters through RuvA and exits via RuvB. An RuvB hexamer assembles on each DNA strand where it exits the tetramer. Each RuvB hexamer is contacted by two RuvA subunits (via domain III) on 2 adjacent RuvB subunits; this complex drives branch migration. In the full resolvosome a probable DNA-RuvA(4)-RuvB(12)-RuvC(2) complex forms which resolves the HJ.

It localises to the cytoplasm. The RuvA-RuvB-RuvC complex processes Holliday junction (HJ) DNA during genetic recombination and DNA repair, while the RuvA-RuvB complex plays an important role in the rescue of blocked DNA replication forks via replication fork reversal (RFR). RuvA specifically binds to HJ cruciform DNA, conferring on it an open structure. The RuvB hexamer acts as an ATP-dependent pump, pulling dsDNA into and through the RuvAB complex. HJ branch migration allows RuvC to scan DNA until it finds its consensus sequence, where it cleaves and resolves the cruciform DNA. The sequence is that of Holliday junction branch migration complex subunit RuvA from Staphylococcus aureus (strain USA300).